The chain runs to 126 residues: Large ribosomal subunit protein eL28 (126 aa).

An N-acetylserine modification is found at S2.

This sequence belongs to the eukaryotic ribosomal protein eL28 family.

The chain is Large ribosomal subunit protein eL28 (rpl-28) from Caenorhabditis elegans.